Reading from the N-terminus, the 454-residue chain is Argininosuccinate synthase (454 aa).

ATP contacts are provided by residues 17 to 25 and alanine 43; that span reads AFSGGLDTS. Tyrosine 99 is a binding site for L-citrulline. The ATP site is built by glycine 129 and threonine 131. Threonine 131, asparagine 135, and aspartate 136 together coordinate L-aspartate. Asparagine 135 provides a ligand contact to L-citrulline. ATP is bound at residue aspartate 136. The L-citrulline site is built by arginine 139 and serine 192. Residue aspartate 194 coordinates ATP. Threonine 201, glutamate 203, and glutamate 280 together coordinate L-citrulline.

Belongs to the argininosuccinate synthase family. Type 2 subfamily. As to quaternary structure, homotetramer.

The protein localises to the cytoplasm. It catalyses the reaction L-citrulline + L-aspartate + ATP = 2-(N(omega)-L-arginino)succinate + AMP + diphosphate + H(+). The protein operates within amino-acid biosynthesis; L-arginine biosynthesis; L-arginine from L-ornithine and carbamoyl phosphate: step 2/3. The protein is Argininosuccinate synthase of Yersinia enterocolitica serotype O:8 / biotype 1B (strain NCTC 13174 / 8081).